Reading from the N-terminus, the 202-residue chain is UPF0301 protein ML0028 (202 aa).

This sequence belongs to the UPF0301 (AlgH) family.

In Mycobacterium leprae (strain TN), this protein is UPF0301 protein ML0028.